Reading from the N-terminus, the 189-residue chain is Tetratricopeptide repeat protein 36 (189 aa).

TPR repeat units lie at residues 51–84, 86–118, and 123–156; these read SKAL…LPER, SAYN…SGGR, and RQSF…GSPF.

The protein belongs to the TTC36 family.

In Homo sapiens (Human), this protein is Tetratricopeptide repeat protein 36 (TTC36).